Consider the following 299-residue polypeptide: ATP phosphoribosyltransferase (299 aa).

Belongs to the ATP phosphoribosyltransferase family. Long subfamily. In terms of assembly, equilibrium between an active dimeric form, an inactive hexameric form and higher aggregates. Interconversion between the various forms is largely reversible and is influenced by the natural substrates and inhibitors of the enzyme. Mg(2+) serves as cofactor.

The protein resides in the cytoplasm. The enzyme catalyses 1-(5-phospho-beta-D-ribosyl)-ATP + diphosphate = 5-phospho-alpha-D-ribose 1-diphosphate + ATP. It participates in amino-acid biosynthesis; L-histidine biosynthesis; L-histidine from 5-phospho-alpha-D-ribose 1-diphosphate: step 1/9. With respect to regulation, feedback inhibited by histidine. Its function is as follows. Catalyzes the condensation of ATP and 5-phosphoribose 1-diphosphate to form N'-(5'-phosphoribosyl)-ATP (PR-ATP). Has a crucial role in the pathway because the rate of histidine biosynthesis seems to be controlled primarily by regulation of HisG enzymatic activity. The sequence is that of ATP phosphoribosyltransferase from Shigella dysenteriae serotype 1 (strain Sd197).